The primary structure comprises 353 residues: Uroporphyrinogen decarboxylase (353 aa).

Substrate is bound by residues 29–33, D79, Y156, T211, and H329; that span reads RQAGR.

Belongs to the uroporphyrinogen decarboxylase family. Homodimer.

It localises to the cytoplasm. The catalysed reaction is uroporphyrinogen III + 4 H(+) = coproporphyrinogen III + 4 CO2. It functions in the pathway porphyrin-containing compound metabolism; protoporphyrin-IX biosynthesis; coproporphyrinogen-III from 5-aminolevulinate: step 4/4. Catalyzes the decarboxylation of four acetate groups of uroporphyrinogen-III to yield coproporphyrinogen-III. The chain is Uroporphyrinogen decarboxylase from Alcanivorax borkumensis (strain ATCC 700651 / DSM 11573 / NCIMB 13689 / SK2).